A 475-amino-acid polypeptide reads, in one-letter code: Ribulose bisphosphate carboxylase large chain (475 aa).

A propeptide spanning residues 1-2 (MS) is cleaved from the precursor. Pro-3 carries the N-acetylproline modification. Lys-14 bears the N6,N6,N6-trimethyllysine mark. Residues Asn-123 and Thr-173 each contribute to the substrate site. The active-site Proton acceptor is the Lys-175. Position 177 (Lys-177) interacts with substrate. Mg(2+) contacts are provided by Lys-201, Asp-203, and Glu-204. Lys-201 bears the N6-carboxylysine mark. His-294 acts as the Proton acceptor in catalysis. 3 residues coordinate substrate: Arg-295, His-327, and Ser-379.

The protein belongs to the RuBisCO large chain family. Type I subfamily. In terms of assembly, heterohexadecamer of 8 large chains and 8 small chains; disulfide-linked. The disulfide link is formed within the large subunit homodimers. Mg(2+) serves as cofactor. The disulfide bond which can form in the large chain dimeric partners within the hexadecamer appears to be associated with oxidative stress and protein turnover.

Its subcellular location is the plastid. The protein localises to the chloroplast. It catalyses the reaction 2 (2R)-3-phosphoglycerate + 2 H(+) = D-ribulose 1,5-bisphosphate + CO2 + H2O. It carries out the reaction D-ribulose 1,5-bisphosphate + O2 = 2-phosphoglycolate + (2R)-3-phosphoglycerate + 2 H(+). Functionally, ruBisCO catalyzes two reactions: the carboxylation of D-ribulose 1,5-bisphosphate, the primary event in carbon dioxide fixation, as well as the oxidative fragmentation of the pentose substrate in the photorespiration process. Both reactions occur simultaneously and in competition at the same active site. The chain is Ribulose bisphosphate carboxylase large chain from Nandina domestica (Heavenly bamboo).